Consider the following 257-residue polypeptide: Acetylglutamate kinase (257 aa).

Residues 43 to 44 (GG), Arg65, and Asn157 each bind substrate. Residues 180–185 (DVSGIL) and 208–210 (IIT) each bind ATP.

The protein belongs to the acetylglutamate kinase family. ArgB subfamily. Homodimer.

Its subcellular location is the cytoplasm. The catalysed reaction is N-acetyl-L-glutamate + ATP = N-acetyl-L-glutamyl 5-phosphate + ADP. It functions in the pathway amino-acid biosynthesis; L-arginine biosynthesis; N(2)-acetyl-L-ornithine from L-glutamate: step 2/4. Its function is as follows. Catalyzes the ATP-dependent phosphorylation of N-acetyl-L-glutamate. This is Acetylglutamate kinase from Pectobacterium atrosepticum (strain SCRI 1043 / ATCC BAA-672) (Erwinia carotovora subsp. atroseptica).